Reading from the N-terminus, the 366-residue chain is Outer membrane protein IIIA (366 aa).

Positions 1-22 are cleaved as a signal peptide; that stretch reads MNIRMVLLASAAAFAASTPVLA.

This sequence belongs to the alphaproteobacteria porin family. As to quaternary structure, forms calcium-stabilized oligomers. Attached covalently to peptidoglycan.

It is found in the cell outer membrane. In terms of biological role, may act as an outer membrane pore. The sequence is that of Outer membrane protein IIIA (ropA) from Rhizobium leguminosarum bv. viciae.